The following is a 162-amino-acid chain: NADH-quinone oxidoreductase subunit I (162 aa).

4Fe-4S ferredoxin-type domains lie at 54-83 and 93-122; these read RRYENGEERCIACKLCEAVCPALAITIESE and TRYDIDLTKCIFCGFCEESCPVDSIVETQI. Residues C63, C66, C69, C73, C102, C105, C108, and C112 each contribute to the [4Fe-4S] cluster site.

Belongs to the complex I 23 kDa subunit family. As to quaternary structure, NDH-1 is composed of 14 different subunits. Subunits NuoA, H, J, K, L, M, N constitute the membrane sector of the complex. Requires [4Fe-4S] cluster as cofactor.

It is found in the cell inner membrane. The catalysed reaction is a quinone + NADH + 5 H(+)(in) = a quinol + NAD(+) + 4 H(+)(out). NDH-1 shuttles electrons from NADH, via FMN and iron-sulfur (Fe-S) centers, to quinones in the respiratory chain. The immediate electron acceptor for the enzyme in this species is believed to be ubiquinone. Couples the redox reaction to proton translocation (for every two electrons transferred, four hydrogen ions are translocated across the cytoplasmic membrane), and thus conserves the redox energy in a proton gradient. In Burkholderia ambifaria (strain MC40-6), this protein is NADH-quinone oxidoreductase subunit I.